The primary structure comprises 114 residues: Aspartate 1-decarboxylase (114 aa).

Catalysis depends on Ser25, which acts as the Schiff-base intermediate with substrate; via pyruvic acid. Ser25 carries the pyruvic acid (Ser) modification. A substrate-binding site is contributed by Thr57. Catalysis depends on Tyr58, which acts as the Proton donor. Position 73–75 (73–75 (GAA)) interacts with substrate.

Belongs to the PanD family. Heterooctamer of four alpha and four beta subunits. Pyruvate is required as a cofactor. Post-translationally, is synthesized initially as an inactive proenzyme, which is activated by self-cleavage at a specific serine bond to produce a beta-subunit with a hydroxyl group at its C-terminus and an alpha-subunit with a pyruvoyl group at its N-terminus.

It is found in the cytoplasm. It catalyses the reaction L-aspartate + H(+) = beta-alanine + CO2. It functions in the pathway cofactor biosynthesis; (R)-pantothenate biosynthesis; beta-alanine from L-aspartate: step 1/1. Functionally, catalyzes the pyruvoyl-dependent decarboxylation of aspartate to produce beta-alanine. This chain is Aspartate 1-decarboxylase, found in Thermotoga sp. (strain RQ2).